The chain runs to 593 residues: Methionine--tRNA ligase, mitochondrial (593 aa).

The N-terminal 29 residues, 1–29, are a transit peptide targeting the mitochondrion; that stretch reads MLRTSVLRLLGRTGASRLSLLEDFGPRYY. The 'HIGH' region motif lies at 52 to 62; that stretch reads FYVNAAPHIGH. A 'KMSKS' region motif is present at residues 347–351; the sequence is KMSKS. Lys-350 is an ATP binding site.

This sequence belongs to the class-I aminoacyl-tRNA synthetase family.

The protein resides in the mitochondrion matrix. The enzyme catalyses tRNA(Met) + L-methionine + ATP = L-methionyl-tRNA(Met) + AMP + diphosphate. The sequence is that of Methionine--tRNA ligase, mitochondrial (MARS2) from Homo sapiens (Human).